A 118-amino-acid polypeptide reads, in one-letter code: Beta-2-microglobulin (118 aa).

An N-terminal signal peptide occupies residues 1 to 20 (MAVSAALVLLGLLSLSGLDA). The Ig-like C1-type domain occupies 25–112 (PEVQVYSRHP…HVTLTQPKIV (88 aa)). Cys45 and Cys99 are oxidised to a cystine.

Belongs to the beta-2-microglobulin family. Heterodimer of an alpha chain and a beta chain. Beta-2-microglobulin is the beta-chain of major histocompatibility complex class I molecules.

The protein resides in the secreted. Component of the class I major histocompatibility complex (MHC). Involved in the presentation of peptide antigens to the immune system. The chain is Beta-2-microglobulin (B2M) from Ovis aries (Sheep).